The primary structure comprises 168 residues: MLAKSGFKIVLNGCLNDRGDNLAHYFSRQGDVIDLIALKEVINDDNRHLLLDYNFSQRQCVHIVVCEDKVNAIKKLKVLLEMGADINGQERKGGNTPLHLAVHSNNYKLVKWLCKQPSINKTALNYAQKTPHDIAIERIEKKINNALMEQKKWYKIMHPSGADLSEEE.

ANK repeat units follow at residues 56–88 (SQRQ…DING) and 93–123 (GGNT…NKTA).

This sequence belongs to the polydnaviridae I-Kappa-B-like protein family.

Suppresses the host immune response through NF-kappa-B inactivation. Possesses ankyrin repeat domains required for NF-kappa-B binding but lacks the regulatory regions required for dissociation from NF-kappa-B and degradation. Therefore, prevents host NF-kappa-B release and subsequent activation. This chain is I-Kappa-B like protein G2 (G4), found in Microplitis demolitor (Parasitoid wasp).